A 185-amino-acid chain; its full sequence is NEDD8-conjugating enzyme UBE2F (185 aa).

An N-acetylmethionine modification is found at Met-1. The segment at 1-29 (MLTLASKLKRDDGLKGSRTAATASDSTRR) is interaction with UBA3. The region spanning 32-185 (VRDKLLVKEV…VDDYIKRYAR (154 aa)) is the UBC core domain. Cys-116 (glycyl thioester intermediate) is an active-site residue.

The protein belongs to the ubiquitin-conjugating enzyme family. UBE2F subfamily. In terms of assembly, interacts with UBA3 and RBX2. Interacts (N-terminally acetylated form) with (via DCUN1 domain) DCUN1D1, DCUN1D2, DCUN1D3, DCUN1D4 and DCUN1D5. In terms of processing, the acetylation of Met-1 increases affinity for DCUN1D3 by about 2 orders of magnitude and is crucial for NEDD8 transfer to cullins. In terms of tissue distribution, widely expressed (at protein level).

It carries out the reaction [E1 NEDD8-activating enzyme]-S-[NEDD8 protein]-yl-L-cysteine + [E2 NEDD8-conjugating enzyme]-L-cysteine = [E1 NEDD8-activating enzyme]-L-cysteine + [E2 NEDD8-conjugating enzyme]-S-[NEDD8-protein]-yl-L-cysteine.. It participates in protein modification; protein neddylation. Accepts the ubiquitin-like protein NEDD8 from the UBA3-NAE1 E1 complex and catalyzes its covalent attachment to other proteins. Together with the E3 ubiquitin ligase RNF7/RBX2, specifically neddylates cullin-5 (CUL5). Does not neddylate CUL1, CUL2, CUL3, CUL4A or CUL4B. Mediates neddylation of the CUL9-RBX1 complex. Its function is as follows. (Microbial infection) Following infection by HIV-1 virus, participates to HIV-1 Vif protein-mediated ubiquitination and degradation of APOBEC3G by mediating neddylation of cullin-5 (CUL5). The polypeptide is NEDD8-conjugating enzyme UBE2F (UBE2F) (Homo sapiens (Human)).